A 698-amino-acid chain; its full sequence is Methionine synthase reductase (698 aa).

The Flavodoxin-like domain occupies 5 to 147 (LLLYATQQGQ…VVEPWIAGLW (143 aa)). Residue 93 to 124 (LLGLGDSEYTYFCNGGKIIDKRLQELGARHFY) coordinates FMN. Residues 166–247 (ALPVASPASS…ASLNIPGLPP (82 aa)) form a hinge region. A phosphoserine mark is found at Ser171 and Ser189. One can recognise an FAD-binding FR-type domain in the interval 271–533 (DPVFQVPISK…PRTTNSFHLP (263 aa)). Lys291 serves as a coordination point for NADP(+). FAD-binding positions include 451 to 454 (RPYS) and 487 to 490 (GVCT). NADP(+) is bound by residues 610–611 (SR), 624–626 (YVQ), and Asp659. Trp697 lines the FAD pocket.

As to quaternary structure, forms a multiprotein complex with MMACHC, MMADHC and MTR. Requires FAD as cofactor. FMN serves as cofactor. As to expression, found in all tissues tested, particularly abundant in skeletal muscle.

Its subcellular location is the cytoplasm. It carries out the reaction 2 methylcob(III)alamin-[methionine synthase] + 2 S-adenosyl-L-homocysteine + NADP(+) + H(+) = 2 cob(II)alamin-[methionine synthase] + 2 S-adenosyl-L-methionine + NADPH. The catalysed reaction is 2 cob(II)alamin + A + 2 H2O + 2 H(+) = 2 aquacob(III)alamin + AH2. Functionally, key enzyme in methionine and folate homeostasis responsible for the reactivation of methionine synthase (MTR/MS) activity by catalyzing the reductive methylation of MTR-bound cob(II)alamin. Cobalamin (vitamin B12) forms a complex with MTR to serve as an intermediary in methyl transfer reactions that cycles between MTR-bound methylcob(III)alamin and MTR bound-cob(I)alamin forms, and occasional oxidative escape of the cob(I)alamin intermediate during the catalytic cycle leads to the inactive cob(II)alamin species. The processing of cobalamin in the cytosol occurs in a multiprotein complex composed of at least MMACHC, MMADHC, MTRR and MTR which may contribute to shuttle safely and efficiently cobalamin towards MTR in order to produce methionine. Also necessary for the utilization of methyl groups from the folate cycle, thereby affecting transgenerational epigenetic inheritance. Also acts as a molecular chaperone for methionine synthase by stabilizing apoMTR and incorporating methylcob(III)alamin into apoMTR to form the holoenzyme. Also serves as an aquacob(III)alamin reductase by reducing aquacob(III)alamin to cob(II)alamin; this reduction leads to stimulation of the conversion of apoMTR and aquacob(III)alamin to MTR holoenzyme. This Homo sapiens (Human) protein is Methionine synthase reductase.